We begin with the raw amino-acid sequence, 548 residues long: Glucose-6-phosphate isomerase 1 (548 aa).

Glu-353 serves as the catalytic Proton donor. Residues His-384 and Lys-495 contribute to the active site.

The protein belongs to the GPI family.

It is found in the cytoplasm. The catalysed reaction is alpha-D-glucose 6-phosphate = beta-D-fructose 6-phosphate. Its pathway is carbohydrate biosynthesis; gluconeogenesis. It functions in the pathway carbohydrate degradation; glycolysis; D-glyceraldehyde 3-phosphate and glycerone phosphate from D-glucose: step 2/4. Functionally, catalyzes the reversible isomerization of glucose-6-phosphate to fructose-6-phosphate. The polypeptide is Glucose-6-phosphate isomerase 1 (Chromohalobacter salexigens (strain ATCC BAA-138 / DSM 3043 / CIP 106854 / NCIMB 13768 / 1H11)).